The following is a 383-amino-acid chain: uncharacterized protein (383 aa).

The protein to V.anguillarum virulence protein VirA.

In terms of biological role, could have an enzymatic function. This is an uncharacterized protein from Sinorhizobium fredii (strain NBRC 101917 / NGR234).